Consider the following 219-residue polypeptide: 7-cyano-7-deazaguanine synthase (219 aa).

Position 10 to 20 (10 to 20 (FSGGQDSTTCL)) interacts with ATP. Zn(2+) contacts are provided by C188, C197, C200, and C203.

Belongs to the QueC family. Homodimer. Zn(2+) serves as cofactor.

The catalysed reaction is 7-carboxy-7-deazaguanine + NH4(+) + ATP = 7-cyano-7-deazaguanine + ADP + phosphate + H2O + H(+). It functions in the pathway purine metabolism; 7-cyano-7-deazaguanine biosynthesis. Catalyzes the ATP-dependent conversion of 7-carboxy-7-deazaguanine (CDG) to 7-cyano-7-deazaguanine (preQ(0)). The chain is 7-cyano-7-deazaguanine synthase from Clostridium botulinum (strain 657 / Type Ba4).